The following is a 104-amino-acid chain: Phosphoribosyl-ATP pyrophosphatase (104 aa).

It belongs to the PRA-PH family.

It localises to the cytoplasm. The enzyme catalyses 1-(5-phospho-beta-D-ribosyl)-ATP + H2O = 1-(5-phospho-beta-D-ribosyl)-5'-AMP + diphosphate + H(+). The protein operates within amino-acid biosynthesis; L-histidine biosynthesis; L-histidine from 5-phospho-alpha-D-ribose 1-diphosphate: step 2/9. This chain is Phosphoribosyl-ATP pyrophosphatase, found in Allorhizobium ampelinum (strain ATCC BAA-846 / DSM 112012 / S4) (Agrobacterium vitis (strain S4)).